The sequence spans 155 residues: 6,7-dimethyl-8-ribityllumazine synthase (155 aa).

Residues Phe23, 57-59 (AFE), and 81-83 (AVI) each bind 5-amino-6-(D-ribitylamino)uracil. 86–87 (ST) is a binding site for (2S)-2-hydroxy-3-oxobutyl phosphate. His89 acts as the Proton donor in catalysis. Phe114 provides a ligand contact to 5-amino-6-(D-ribitylamino)uracil. Arg128 is a binding site for (2S)-2-hydroxy-3-oxobutyl phosphate.

Belongs to the DMRL synthase family.

It carries out the reaction (2S)-2-hydroxy-3-oxobutyl phosphate + 5-amino-6-(D-ribitylamino)uracil = 6,7-dimethyl-8-(1-D-ribityl)lumazine + phosphate + 2 H2O + H(+). The protein operates within cofactor biosynthesis; riboflavin biosynthesis; riboflavin from 2-hydroxy-3-oxobutyl phosphate and 5-amino-6-(D-ribitylamino)uracil: step 1/2. In terms of biological role, catalyzes the formation of 6,7-dimethyl-8-ribityllumazine by condensation of 5-amino-6-(D-ribitylamino)uracil with 3,4-dihydroxy-2-butanone 4-phosphate. This is the penultimate step in the biosynthesis of riboflavin. The polypeptide is 6,7-dimethyl-8-ribityllumazine synthase (Citrifermentans bemidjiense (strain ATCC BAA-1014 / DSM 16622 / JCM 12645 / Bem) (Geobacter bemidjiensis)).